We begin with the raw amino-acid sequence, 908 residues long: NADH-quinone oxidoreductase subunit G (908 aa).

Residues 2–83 (ATIHVDGKEY…GTFISIDDEE (82 aa)) form the 2Fe-2S ferredoxin-type domain. The [2Fe-2S] cluster site is built by Cys-34, Cys-45, Cys-48, and Cys-67. The region spanning 83-122 (EAKQFRESVVEWLMTNHPHDCPVCEEGGNCHLQDMTVMTG) is the 4Fe-4S His(Cys)3-ligated-type domain. Residues His-99, Cys-103, Cys-106, Cys-112, Cys-151, Cys-154, Cys-157, Cys-201, Cys-228, Cys-231, Cys-235, and Cys-263 each coordinate [4Fe-4S] cluster. The region spanning 221 to 277 (MQFAPSICQQCSIGCNISPGERYGELRRIENRYNGTVNHYFLCDRGRFGYGYVNLKD) is the 4Fe-4S Mo/W bis-MGD-type domain.

It belongs to the complex I 75 kDa subunit family. Composed of 13 different subunits. Subunits NuoCD, E, F, and G constitute the peripheral sector of the complex. Requires [2Fe-2S] cluster as cofactor. The cofactor is [4Fe-4S] cluster.

It catalyses the reaction a quinone + NADH + 5 H(+)(in) = a quinol + NAD(+) + 4 H(+)(out). Functionally, NDH-1 shuttles electrons from NADH, via FMN and iron-sulfur (Fe-S) centers, to quinones in the respiratory chain. The immediate electron acceptor for the enzyme in this species is believed to be ubiquinone. Couples the redox reaction to proton translocation (for every two electrons transferred, four hydrogen ions are translocated across the cytoplasmic membrane), and thus conserves the redox energy in a proton gradient. This Escherichia coli O6:H1 (strain CFT073 / ATCC 700928 / UPEC) protein is NADH-quinone oxidoreductase subunit G (nuoG).